The primary structure comprises 191 residues: dTTP/UTP pyrophosphatase (191 aa).

Asp69 functions as the Proton acceptor in the catalytic mechanism.

It belongs to the Maf family. YhdE subfamily. It depends on a divalent metal cation as a cofactor.

The protein resides in the cytoplasm. It catalyses the reaction dTTP + H2O = dTMP + diphosphate + H(+). The enzyme catalyses UTP + H2O = UMP + diphosphate + H(+). Functionally, nucleoside triphosphate pyrophosphatase that hydrolyzes dTTP and UTP. May have a dual role in cell division arrest and in preventing the incorporation of modified nucleotides into cellular nucleic acids. This chain is dTTP/UTP pyrophosphatase, found in Pelotomaculum thermopropionicum (strain DSM 13744 / JCM 10971 / SI).